A 320-amino-acid chain; its full sequence is O(6)-methylguanine-induced apoptosis 2 (320 aa).

The segment at 46-91 is disordered; sequence LNESPGPGSYLSHSPAEGCSPSFSKRGTGSFASKGGRVPRSFQRLS. 7 STPGR repeats span residues 49–82, 91–103, 132–163, 173–192, 213–233, 254–266, and 294–305; these read SPGP…KGGR, SPGP…QMSL, NPAP…KTRR, GPSP…SPQA, PGPG…TVLP, PGPG…NYNR, and PGPGFYEPTVLS. Polar residues predominate over residues 66–76; the sequence is PSFSKRGTGSF. The segment at 207-226 is disordered; the sequence is PVRNNIPGPGTYNPHQPPEP.

Belongs to the STPG1 family.

It is found in the cytoplasm. The protein localises to the nucleus. In terms of biological role, may positively contribute to the induction of apoptosis triggered by O(6)-methylguanine. The protein is O(6)-methylguanine-induced apoptosis 2 (stpg1) of Danio rerio (Zebrafish).